The following is a 650-amino-acid chain: Acetyl-coenzyme A synthetase (650 aa).

Residues Arg191–Arg194, Thr311, and Asn335 contribute to the CoA site. Residues Gly387–Pro389, Asp411–Thr416, Asp500, and Arg515 contribute to the ATP site. Ser523 contacts CoA. Residue Arg526 coordinates ATP. Residues Val537, His539, and Val542 each contribute to the Mg(2+) site. Arg584 is a binding site for CoA. Lys609 is modified (N6-acetyllysine).

This sequence belongs to the ATP-dependent AMP-binding enzyme family. It depends on Mg(2+) as a cofactor. Post-translationally, acetylated. Deacetylation by the SIR2-homolog deacetylase activates the enzyme.

It catalyses the reaction acetate + ATP + CoA = acetyl-CoA + AMP + diphosphate. In terms of biological role, catalyzes the conversion of acetate into acetyl-CoA (AcCoA), an essential intermediate at the junction of anabolic and catabolic pathways. AcsA undergoes a two-step reaction. In the first half reaction, AcsA combines acetate with ATP to form acetyl-adenylate (AcAMP) intermediate. In the second half reaction, it can then transfer the acetyl group from AcAMP to the sulfhydryl group of CoA, forming the product AcCoA. The protein is Acetyl-coenzyme A synthetase of Shewanella putrefaciens (strain CN-32 / ATCC BAA-453).